A 64-amino-acid polypeptide reads, in one-letter code: PYLa/PGLa A (64 aa).

The first 20 residues, Met1–Ala20, serve as a signal peptide directing secretion. The propeptide occupies Glu21–Arg35. Residue Leu59 is modified to Leucine amide. A propeptide spanning residues Gly60–Ser64 is cleaved from the precursor.

This sequence belongs to the gastrin/cholecystokinin family. Magainin subfamily. Expressed by the skin glands. Synthesized in the stomach and stored in a novel granular multinucleated cell in the gastric mucosa. Stored as active, processed peptides in large granules within the granular gland secretions of the skin.

Its subcellular location is the secreted. PGLa and PGLa-H display a broad-spectrum of antibacterial activity against a range of Gram-positive and Gram-negative bacteria. PGLa also displays antifungal activity against C.albicans ATCC 14053. PGLa-H shows moderate antibacterial activity against the multidrug-resistant methicillin-resistant S.aureus (MRSA) but exhibits very little hemolytic activity. In Xenopus laevis (African clawed frog), this protein is PYLa/PGLa A (pgla-a).